The primary structure comprises 653 residues: Probable syringafactin export ATP-binding/permease protein SyfD (653 aa).

Positions 6-244 constitute an ABC transporter domain; sequence LELNGVTRRF…NEKTTERLPT (239 aa). Residue 42-49 coordinates ATP; sequence GASGSGKS. Helical transmembrane passes span 252-272, 278-298, 526-546, 583-603, and 616-636; these read LMANIGLFQEAFVMAWVALIS, LLTMLGIIIGITSVVSIVAIG, LALLLSLIAVISLAVGGIGVM, MVCLIGGVIGISLSFVIGYVF, and LGSIVTAFICSTLIGIVFGFV.

It belongs to the ABC transporter superfamily. Macrolide exporter (TC 3.A.1.122) family. Probably part of a tripartite efflux system, which is composed of an inner membrane transporter, a periplasmic membrane fusion protein, and an outer membrane component.

Its subcellular location is the cell inner membrane. In terms of biological role, probably involved in the export of syringafactins. The sequence is that of Probable syringafactin export ATP-binding/permease protein SyfD from Pseudomonas syringae pv. syringae (strain B728a).